A 338-amino-acid polypeptide reads, in one-letter code: tRNA N6-adenosine threonylcarbamoyltransferase (338 aa).

The Fe cation site is built by His-111 and His-115. Substrate is bound by residues 133–137, Asp-166, Gly-179, Asp-183, and Asn-275; that span reads LVSGG. Position 300 (Asp-300) interacts with Fe cation.

This sequence belongs to the KAE1 / TsaD family. Fe(2+) is required as a cofactor.

It localises to the cytoplasm. It carries out the reaction L-threonylcarbamoyladenylate + adenosine(37) in tRNA = N(6)-L-threonylcarbamoyladenosine(37) in tRNA + AMP + H(+). Functionally, required for the formation of a threonylcarbamoyl group on adenosine at position 37 (t(6)A37) in tRNAs that read codons beginning with adenine. Is involved in the transfer of the threonylcarbamoyl moiety of threonylcarbamoyl-AMP (TC-AMP) to the N6 group of A37, together with TsaE and TsaB. TsaD likely plays a direct catalytic role in this reaction. This is tRNA N6-adenosine threonylcarbamoyltransferase from Treponema denticola (strain ATCC 35405 / DSM 14222 / CIP 103919 / JCM 8153 / KCTC 15104).